The following is a 2128-amino-acid chain: Non-reducing polyketide synthase albA (2128 aa).

Residues 8-244 (YLFGDQTSDI…VKAPIHGPYH (237 aa)) are N-terminal acylcarrier protein transacylase domain (SAT). A Ketosynthase family 3 (KS3) domain is found at 375 to 806 (NSKIAIIGMS…GGNTALLLED (432 aa)). Residues Cys547, His682, and His724 each act as for beta-ketoacyl synthase activity in the active site. Residues 912 to 1232 (FVFTGQGAQY…LASLHLAGID (321 aa)) form a malonyl-CoA:ACP transacylase (MAT) domain region. Ser1001 functions as the For acyl/malonyl transferase activity in the catalytic mechanism. Residues 1286 to 1425 (HEYLTTAAQK…CTVRFFDCAA (140 aa)) are N-terminal hotdog fold. The PKS/mFAS DH domain occupies 1286 to 1598 (HEYLTTAAQK…FQALSRKILD (313 aa)). Positions 1290 to 1603 (TTAAQKVIET…RKILDTVLPP (314 aa)) are product template (PT) domain. The active-site Proton acceptor; for dehydratase activity is the His1326. Positions 1452–1598 (DAHRLGRGMV…FQALSRKILD (147 aa)) are C-terminal hotdog fold. Asp1511 serves as the catalytic Proton donor; for dehydratase activity. The region spanning 1618–1695 (PSAPSLVKRA…DFKQFLAPMS (78 aa)) is the Carrier 1 domain. Residue Ser1655 is modified to O-(pantetheine 4'-phosphoryl)serine. A disordered region spans residues 1695–1740 (SQGEASDGSTSDPESSSSFNGGSSTDESSAGSPVSSPPNEKVTQVE). Residues 1700 to 1723 (SDGSTSDPESSSSFNGGSSTDESS) show a composition bias toward low complexity. Polar residues predominate over residues 1724-1740 (AGSPVSSPPNEKVTQVE). In terms of domain architecture, Carrier 2 spans 1739-1816 (VEQHATIKEI…DVEDALGLKP (78 aa)). An O-(pantetheine 4'-phosphoryl)serine modification is found at Ser1776. The tract at residues 1854-2126 (SPHPRSTSIL…ELGSFIGNAM (273 aa)) is claisen cyclase domain. Ser1944 (for Claisen cyclase activity) is an active-site residue.

It carries out the reaction 6 malonyl-CoA + acetyl-CoA + 6 H(+) = naphtopyrone YWA1 + 6 CO2 + 7 CoA + H2O. Its pathway is secondary metabolite biosynthesis. Its function is as follows. Non-reducing polyketide synthase; part of the gene cluster that mediates the biosynthesis of aurasperone B, a dimeric gamma-naphthopyrone. The first step in the biosynthesis of aurasperone B is the production of gamma-naphthopyrone precursor YWA1 by the non-reducing polyketide synthase albA, via condensation of one acetyl-CoA starter unit with 6 malonyl-CoA units. YWA1 is then methylated by aunE at position C-6 to yield foncesin which is further methylated at position C-8 by aunD to produce fonsecin B. A key enzyme in the biosynthetic pathway is the cytochrome P450 monooxygenase aunB which catalyzes the oxidative dimerization of fonsecin B to aurasperone B. AunB also catalyzes the oxidative dimerization of rubrofusarin B into aurasperone A. In Aspergillus niger (strain ATCC 1015 / CBS 113.46 / FGSC A1144 / LSHB Ac4 / NCTC 3858a / NRRL 328 / USDA 3528.7), this protein is Non-reducing polyketide synthase albA.